The sequence spans 129 residues: Small ribosomal subunit protein uS11 (129 aa).

Belongs to the universal ribosomal protein uS11 family. Part of the 30S ribosomal subunit. Interacts with proteins S7 and S18. Binds to IF-3.

In terms of biological role, located on the platform of the 30S subunit, it bridges several disparate RNA helices of the 16S rRNA. Forms part of the Shine-Dalgarno cleft in the 70S ribosome. This is Small ribosomal subunit protein uS11 from Pseudomonas fluorescens (strain SBW25).